The sequence spans 357 residues: MSSPEKFSPAPESNSNPSLPDALIISCIARVSRLYYPILSFVSKSFRSLLASPELYKERSLLNRTEGCLYVCLYLNPFESPSWFTLCLKPDQALSSETSNKKKSSGYVLATVSIPHPRLVQRSSLVAVGSNIYNIGRSISPYSSVSIFDCRSHTWREAPSLPVELVEVSAGVLDGKIYVAGSCKDGDSLNLKNTFEVFDTKTQVWDHVPIPYNETKHNIYSKSLCIDEKWYVGAKRKVVSYNPKKGIWDLVESEMCSYKSSYDYCEIENVLYSVEKTWRGTVFRWYDTELGRWRKLEGLNMPYSGTGDRGGKKMIWCAVITLERRKNSGIWGNVEWFAHVLTVPKTFVFQKFLAATV.

Residues 14–61 form the F-box domain; sequence NSNPSLPDALIISCIARVSRLYYPILSFVSKSFRSLLASPELYKERSL. Kelch repeat units lie at residues 131-175, 177-224, 226-267, and 268-313; these read NIYN…VLDG, IYVA…SKSL, IDEK…YCEI, and ENVL…GGKK.

This Arabidopsis thaliana (Mouse-ear cress) protein is Putative F-box/kelch-repeat protein At5g38680.